The primary structure comprises 329 residues: DNA-directed RNA polymerase subunit alpha (329 aa).

The tract at residues 1-235 (MQGSVTEFLK…EQLDAFVDLR (235 aa)) is alpha N-terminal domain (alpha-NTD). The interval 249 to 329 (FDPILLRPVD…NWPPASIAED (81 aa)) is alpha C-terminal domain (alpha-CTD).

Belongs to the RNA polymerase alpha chain family. As to quaternary structure, homodimer. The RNAP catalytic core consists of 2 alpha, 1 beta, 1 beta' and 1 omega subunit. When a sigma factor is associated with the core the holoenzyme is formed, which can initiate transcription.

It catalyses the reaction RNA(n) + a ribonucleoside 5'-triphosphate = RNA(n+1) + diphosphate. DNA-dependent RNA polymerase catalyzes the transcription of DNA into RNA using the four ribonucleoside triphosphates as substrates. In Mannheimia succiniciproducens (strain KCTC 0769BP / MBEL55E), this protein is DNA-directed RNA polymerase subunit alpha.